The chain runs to 299 residues: Oxygen-dependent coproporphyrinogen-III oxidase (299 aa).

S92 is a binding site for substrate. Mn(2+) contacts are provided by H96 and H106. The active-site Proton donor is H106. 108 to 110 (NVR) contributes to the substrate binding site. The Mn(2+) site is built by H145 and H175. Residues 240–275 (YVEFNLVWDRGTLFGLQTGGRTESILMSMPPLVRWE) are important for dimerization. 258 to 260 (GGR) is a binding site for substrate.

Belongs to the aerobic coproporphyrinogen-III oxidase family. Homodimer. Requires Mn(2+) as cofactor.

The protein localises to the cytoplasm. The enzyme catalyses coproporphyrinogen III + O2 + 2 H(+) = protoporphyrinogen IX + 2 CO2 + 2 H2O. It functions in the pathway porphyrin-containing compound metabolism; protoporphyrin-IX biosynthesis; protoporphyrinogen-IX from coproporphyrinogen-III (O2 route): step 1/1. Involved in the heme biosynthesis. Catalyzes the aerobic oxidative decarboxylation of propionate groups of rings A and B of coproporphyrinogen-III to yield the vinyl groups in protoporphyrinogen-IX. In Escherichia coli O127:H6 (strain E2348/69 / EPEC), this protein is Oxygen-dependent coproporphyrinogen-III oxidase.